The following is a 297-amino-acid chain: Protoheme IX farnesyltransferase 1 (297 aa).

Helical transmembrane passes span 23 to 43, 45 to 65, 93 to 113, 117 to 137, 145 to 165, 171 to 191, 216 to 236, 241 to 261, and 277 to 297; these read VVVL…RAGV, WSVL…AAVV, LPAL…LLAF, LTAW…TGFL, IVIG…AVSG, PLLL…ALAI, LHIL…YAIH, LYLA…WVLY, and IAYL…LLNL.

Belongs to the UbiA prenyltransferase family. Protoheme IX farnesyltransferase subfamily.

It localises to the cell inner membrane. The enzyme catalyses heme b + (2E,6E)-farnesyl diphosphate + H2O = Fe(II)-heme o + diphosphate. Its pathway is porphyrin-containing compound metabolism; heme O biosynthesis; heme O from protoheme: step 1/1. Its function is as follows. Converts heme B (protoheme IX) to heme O by substitution of the vinyl group on carbon 2 of heme B porphyrin ring with a hydroxyethyl farnesyl side group. In Pseudomonas putida (strain GB-1), this protein is Protoheme IX farnesyltransferase 1.